The following is a 201-amino-acid chain: MSYVPIVIEQTSRGERAYDIYSRLLKERIIFVCSTVEDHMANLIVAQLLFLEAENPKKDIYMYINSPGGVVTAGLAIYDTMQYIKPKVATLCIGQACSMGSFLLCGGEKGMRYSLPHSRIMIHQPSGGYQGQATDIEIHAQETLKIKRLLNELYSKHTGQDVKHIEKSMERDNFMSPEEAKKFGIVDNIISSRNATGLLTK.

The Nucleophile role is filled by S98. H123 is a catalytic residue.

This sequence belongs to the peptidase S14 family. As to quaternary structure, fourteen ClpP subunits assemble into 2 heptameric rings which stack back to back to give a disk-like structure with a central cavity, resembling the structure of eukaryotic proteasomes.

The protein resides in the cytoplasm. It carries out the reaction Hydrolysis of proteins to small peptides in the presence of ATP and magnesium. alpha-casein is the usual test substrate. In the absence of ATP, only oligopeptides shorter than five residues are hydrolyzed (such as succinyl-Leu-Tyr-|-NHMec, and Leu-Tyr-Leu-|-Tyr-Trp, in which cleavage of the -Tyr-|-Leu- and -Tyr-|-Trp bonds also occurs).. Cleaves peptides in various proteins in a process that requires ATP hydrolysis. Has a chymotrypsin-like activity. Plays a major role in the degradation of misfolded proteins. This is ATP-dependent Clp protease proteolytic subunit from Rickettsia canadensis (strain McKiel).